We begin with the raw amino-acid sequence, 309 residues long: Zinc transporter ZIP2 (309 aa).

At Met-1–Lys-8 the chain is on the extracellular side. The helical transmembrane segment at Ile-9–Val-29 threads the bilayer. Residues Lys-30–Arg-43 lie on the Cytoplasmic side of the membrane. A helical transmembrane segment spans residues Val-44 to Met-64. Over Thr-65–Pro-103 the chain is Extracellular. A helical membrane pass occupies residues Tyr-104–Leu-124. Residues Gln-125–Arg-164 are Cytoplasmic-facing. A helical membrane pass occupies residues Ala-165–Leu-185. Positions 175 and 179 each coordinate Zn(2+). The Extracellular segment spans residues Gln-186–Ala-191. Residues Thr-192 to Leu-212 traverse the membrane as a helical segment. Zn(2+) is bound at residue His-202. The Cytoplasmic segment spans residues Arg-213–Thr-225. Residues Phe-226–Ala-246 traverse the membrane as a helical segment. The Extracellular segment spans residues Gly-247–Gln-258. The chain crosses the membrane as a helical span at residues Ala-259–Pro-279. Residue Glu-276 participates in Zn(2+) binding. Topologically, residues Arg-280–Pro-288 are cytoplasmic. The helical transmembrane segment at Leu-289–Ala-309 threads the bilayer.

This sequence belongs to the ZIP transporter (TC 2.A.5) family. High expression in the liver, skin and ovary.

Its subcellular location is the cell membrane. The enzyme catalyses Zn(2+)(in) = Zn(2+)(out). The catalysed reaction is Cd(2+)(in) = Cd(2+)(out). Its function is as follows. Transporter for the divalent cation Zn(2+). Mediates the influx of Zn(2+) into cells from extracellular space. The Zn(2+) uniporter activity is independent of H(+)-driving force, but is modulated by extracellular pH and membrane potential. Transports also other divalent cations Zn(2+), Cd2(+), Cu2(+), Co2(+) in the order of decreasing affinity, respectively. In the skin, aids in the differentiation of keratinocytes in the epidermis. The chain is Zinc transporter ZIP2 (Slc39a2) from Mus musculus (Mouse).